An 89-amino-acid polypeptide reads, in one-letter code: Small ribosomal subunit protein uS15 (89 aa).

The protein belongs to the universal ribosomal protein uS15 family. As to quaternary structure, part of the 30S ribosomal subunit. Forms a bridge to the 50S subunit in the 70S ribosome, contacting the 23S rRNA.

Functionally, one of the primary rRNA binding proteins, it binds directly to 16S rRNA where it helps nucleate assembly of the platform of the 30S subunit by binding and bridging several RNA helices of the 16S rRNA. Forms an intersubunit bridge (bridge B4) with the 23S rRNA of the 50S subunit in the ribosome. The polypeptide is Small ribosomal subunit protein uS15 (Lysinibacillus sphaericus (strain C3-41)).